The sequence spans 279 residues: Eukaryotic translation initiation factor 3 subunit G (279 aa).

3 disordered regions span residues 1 to 26 (MSTG…IANP), 66 to 115 (RKNW…KAHE), and 152 to 171 (TPSG…AAGA). A Phosphoserine modification is found at Ser-78. The span at 102–115 (KQDEKKEEEDKAHE) shows a compositional bias: basic and acidic residues. Residues 152-163 (TPSGTTPEPTSE) are compositionally biased toward low complexity. In terms of domain architecture, RRM spans 197–276 (TTLKVSQLNS…LILHLEWSKK (80 aa)).

This sequence belongs to the eIF-3 subunit G family. In terms of assembly, component of the eukaryotic translation initiation factor 3 (eIF-3) complex.

The protein localises to the cytoplasm. In terms of biological role, RNA-binding component of the eukaryotic translation initiation factor 3 (eIF-3) complex, which is involved in protein synthesis of a specialized repertoire of mRNAs and, together with other initiation factors, stimulates binding of mRNA and methionyl-tRNAi to the 40S ribosome. The eIF-3 complex specifically targets and initiates translation of a subset of mRNAs involved in cell proliferation. This subunit can bind 18S rRNA. In Candida albicans (strain SC5314 / ATCC MYA-2876) (Yeast), this protein is Eukaryotic translation initiation factor 3 subunit G.